We begin with the raw amino-acid sequence, 307 residues long: Oxygen-dependent coproporphyrinogen-III oxidase (307 aa).

Residue S99 participates in substrate binding. Positions 103 and 113 each coordinate a divalent metal cation. H113 acts as the Proton donor in catalysis. 115 to 117 (NVR) is a binding site for substrate. A divalent metal cation is bound by residues H152 and H182. The tract at residues 247 to 282 (YVEFNLVFDRGTLFGLQSGGRTESILMSMPPVANWR) is important for dimerization. 265–267 (GGR) is a substrate binding site.

Belongs to the aerobic coproporphyrinogen-III oxidase family. In terms of assembly, homodimer. A divalent metal cation serves as cofactor.

The protein localises to the cytoplasm. The catalysed reaction is coproporphyrinogen III + O2 + 2 H(+) = protoporphyrinogen IX + 2 CO2 + 2 H2O. The protein operates within porphyrin-containing compound metabolism; protoporphyrin-IX biosynthesis; protoporphyrinogen-IX from coproporphyrinogen-III (O2 route): step 1/1. Functionally, involved in the heme biosynthesis. Catalyzes the aerobic oxidative decarboxylation of propionate groups of rings A and B of coproporphyrinogen-III to yield the vinyl groups in protoporphyrinogen-IX. The polypeptide is Oxygen-dependent coproporphyrinogen-III oxidase (Burkholderia lata (strain ATCC 17760 / DSM 23089 / LMG 22485 / NCIMB 9086 / R18194 / 383)).